Here is a 291-residue protein sequence, read N- to C-terminus: Protease HtpX (291 aa).

2 helical membrane passes run 4 to 24 (IALFLATNLAVMIVFSIVLNI) and 36 to 56 (LSGLLVMAVLFGFGGSLISLM). Zn(2+) is bound at residue His-143. Residue Glu-144 is part of the active site. His-147 contacts Zn(2+). 2 consecutive transmembrane segments (helical) span residues 151 to 171 (GDMITMTLMQGVVNTFVIFLS) and 199 to 219 (FIVSTVLELAFGFLASFLTMW). Glu-225 contributes to the Zn(2+) binding site.

Belongs to the peptidase M48B family. Requires Zn(2+) as cofactor.

The protein resides in the cell inner membrane. This Aliivibrio fischeri (strain ATCC 700601 / ES114) (Vibrio fischeri) protein is Protease HtpX.